The chain runs to 182 residues: Isopentenyl-diphosphate Delta-isomerase (182 aa).

Mn(2+) is bound by residues His23 and His30. The 135-residue stretch at 28–162 (PRHLAFSCHV…PWAFSPWLVE (135 aa)) folds into the Nudix hydrolase domain. Residue Cys65 is part of the active site. Cys65 lines the Mg(2+) pocket. His67 serves as a coordination point for Mn(2+). Glu85 is a binding site for Mg(2+). 2 residues coordinate Mn(2+): Glu112 and Glu114. Residue Glu114 is part of the active site.

This sequence belongs to the IPP isomerase type 1 family. It depends on Mg(2+) as a cofactor. Mn(2+) is required as a cofactor.

Its subcellular location is the cytoplasm. The enzyme catalyses isopentenyl diphosphate = dimethylallyl diphosphate. Its pathway is isoprenoid biosynthesis; dimethylallyl diphosphate biosynthesis; dimethylallyl diphosphate from isopentenyl diphosphate: step 1/1. Functionally, catalyzes the 1,3-allylic rearrangement of the homoallylic substrate isopentenyl (IPP) to its highly electrophilic allylic isomer, dimethylallyl diphosphate (DMAPP). The sequence is that of Isopentenyl-diphosphate Delta-isomerase from Brevibacterium linens.